Reading from the N-terminus, the 424-residue chain is Serine--tRNA ligase (424 aa).

231–233 (TAE) contributes to the L-serine binding site. 262–264 (RSE) is an ATP binding site. Residue Glu285 coordinates L-serine. Residue 349-352 (EISS) participates in ATP binding. Ser385 serves as a coordination point for L-serine.

Belongs to the class-II aminoacyl-tRNA synthetase family. Type-1 seryl-tRNA synthetase subfamily. In terms of assembly, homodimer. The tRNA molecule binds across the dimer.

The protein localises to the cytoplasm. The catalysed reaction is tRNA(Ser) + L-serine + ATP = L-seryl-tRNA(Ser) + AMP + diphosphate + H(+). The enzyme catalyses tRNA(Sec) + L-serine + ATP = L-seryl-tRNA(Sec) + AMP + diphosphate + H(+). It functions in the pathway aminoacyl-tRNA biosynthesis; selenocysteinyl-tRNA(Sec) biosynthesis; L-seryl-tRNA(Sec) from L-serine and tRNA(Sec): step 1/1. In terms of biological role, catalyzes the attachment of serine to tRNA(Ser). Is also able to aminoacylate tRNA(Sec) with serine, to form the misacylated tRNA L-seryl-tRNA(Sec), which will be further converted into selenocysteinyl-tRNA(Sec). This chain is Serine--tRNA ligase, found in Marinobacter nauticus (strain ATCC 700491 / DSM 11845 / VT8) (Marinobacter aquaeolei).